Consider the following 445-residue polypeptide: Gasdermin-A (445 aa).

The interval 1–251 (MTMFENVTRA…VILIQASDVG (251 aa)) is triggers pyroptosis. Position 9–13 (9–13 (RALAR)) interacts with a cardiolipin. A run of 4 beta stranded transmembrane segments spans residues 78 to 95 (NFGF…DVDV), 99 to 120 (VKVK…TLSV), 163 to 179 (VTLE…SLPF), and 183 to 197 (LGLQ…AVTI).

The protein belongs to the gasdermin family. As to quaternary structure, homooligomer; homooligomeric ring-shaped pore complex containing 18-36 subunits when inserted in the membrane. Post-translationally, cleavage by S.pyogenes SpeB relieves autoinhibition by releasing the N-terminal moiety (Gasdermin-A, N-terminal) that initiates pyroptosis. Palmitoylated. In terms of tissue distribution, expressed predominantly in the gastrointestinal tract and, at a lower level, in the skin. Also detected in mammary gland. In the gastrointestinal tract, mainly expressed in differentiated cells, including the differentiated cell layer of esophagus and mucus-secreting pit cells of the gastric epithelium. Down-regulated in gastric cancer cells.

It is found in the cytoplasm. Its subcellular location is the perinuclear region. The protein localises to the cytosol. The protein resides in the cell membrane. Its activity is regulated as follows. The full-length protein before cleavage is inactive: intramolecular interactions between N- and C-terminal domains mediate autoinhibition in the absence of activation signal. The intrinsic pyroptosis-inducing activity is carried by the released N-terminal moiety (Gasdermin-A, N-terminal) following cleavage by S.pyogenes effector protein SpeB. In terms of biological role, this form constitutes the precursor of the pore-forming protein and acts as a sensor of infection: upon infection by S.pyogenes, specifically cleaved by S.pyogenes effector protein SpeB in epithelial cells, releasing the N-terminal moiety (Gasdermin-A, N-terminal) that binds to membranes and forms pores, triggering pyroptosis. Its function is as follows. Pore-forming protein that causes membrane permeabilization and pyroptosis. Released upon cleavage by S.pyogenes effector protein SpeB, and binds to membrane inner leaflet lipids. Homooligomerizes within the membrane and forms pores of 10-15 nanometers (nm) of inner diameter, triggering pyroptosis. Pyroptosis triggers the elimination of the infected skin cell, depriving the pathogen of its protective niche, while inducing an inflammatory response. This ultimately prevents bacterial penetration of the epithelial barrier and a subsequent systemic dissemination of the pathogen. Binds to cardiolipin and other acidic phospholipids, such as phosphatidylserine, which mediate its targeting to the inner leaflet membrane. This Homo sapiens (Human) protein is Gasdermin-A.